The chain runs to 806 residues: MYNHNKIEKKWQKYWLDNKTFKFVDNPNNPKKFYVLDMFPYPSGKGLHVGHPKGYTATDVISRFKRLNGYDVLHPIGWDAFGLPAEQYALETNNHPHTFTQQNIKIFRKQLQMIGFDFDYDKEVDTTDPQFYQWTQWIFVQLYKHNLAEIQDIDVNWCENLGTVLSNEEVVLNDKNERVSERGGHPVVRKPMKQWVLKIVDYADKLLDGLNEVEFSESLKSLQRNWIGKSIGTSVQFKIKDSLLTLDVFTTRIDTIYGVQYLVVAPEHPILKSITSEQQINVVQSYIEQTKKISDLDRIADTNKTGVFSGAYAINPINQEIIPIWVSDYVLMNFATGAVMGVPAHDERDYAFAKKYALPIKSVIDTKQKLPYAGDGLHINSAMINGLNIKQSQNVLNDYLIKNHLGKKVANYKLRNWIFSRQRYWGEPFPVLFDENNQIKIIEDLPVLLPNLNEFKPSKTGESPLANAQEWLYVEIDGKKYRRETNTMPQWAGSSWYFLAYILKNEDGSYTPLNSEEAKKRFAKWLPVDVYIGGQEHAVLHLLYSRFWHRFLYDIGVVPTKEPFYKVINQGMILGENNEKMSKSKGNVINPDDIIASHGADTLRIYEMFMGPLTASLPWNPDGLDAMRKWLDRVYRLYHNLSELEVVEDLNKLNEEIIIAYHTLIKNYTKAINEQAFNIAISEMMVFVNVLYKNKVINYELLDNFLILLSCYAPHLAEELYSLNHSESVCLQKMPIYDEQKIIAQNITIPIQINGKLKHTINVLRDTNAEELVNLALACEQVKQEIGDQPIKKQIVVVNKIINFVI.

The short motif at 40-51 (PYPSGKGLHVGH) is the 'HIGH' region element. The 'KMSKS' region signature appears at 580-584 (KMSKS). Lys583 serves as a coordination point for ATP.

The protein belongs to the class-I aminoacyl-tRNA synthetase family.

The protein localises to the cytoplasm. It catalyses the reaction tRNA(Leu) + L-leucine + ATP = L-leucyl-tRNA(Leu) + AMP + diphosphate. This Ureaplasma parvum serovar 3 (strain ATCC 27815 / 27 / NCTC 11736) protein is Leucine--tRNA ligase.